The chain runs to 417 residues: UDP-N-acetylglucosamine 1-carboxyvinyltransferase (417 aa).

A phosphoenolpyruvate-binding site is contributed by 22–23; it reads KN. Position 93 (R93) interacts with UDP-N-acetyl-alpha-D-glucosamine. C117 acts as the Proton donor in catalysis. C117 carries the post-translational modification 2-(S-cysteinyl)pyruvic acid O-phosphothioketal. Residues 122–126, D304, and I326 each bind UDP-N-acetyl-alpha-D-glucosamine; that span reads RPVDQ.

It belongs to the EPSP synthase family. MurA subfamily.

It localises to the cytoplasm. It carries out the reaction phosphoenolpyruvate + UDP-N-acetyl-alpha-D-glucosamine = UDP-N-acetyl-3-O-(1-carboxyvinyl)-alpha-D-glucosamine + phosphate. It participates in cell wall biogenesis; peptidoglycan biosynthesis. Functionally, cell wall formation. Adds enolpyruvyl to UDP-N-acetylglucosamine. This is UDP-N-acetylglucosamine 1-carboxyvinyltransferase from Neisseria meningitidis serogroup C (strain 053442).